We begin with the raw amino-acid sequence, 357 residues long: Retinoic acid-induced protein 3 (357 aa).

The Extracellular portion of the chain corresponds to 1 to 33; that stretch reads MATTVPDGCRNGLKSKYYRLCDKAEAWGIVLET. Residues 34–54 traverse the membrane as a helical segment; sequence VATAGVVTSVAFMLTLPILVC. Over 55-68 the chain is Cytoplasmic; that stretch reads KVQDSNRRKMLPTQ. The helical transmembrane segment at 69–89 threads the bilayer; it reads FLFLLGVLGIFGLTFAFIIGL. Topologically, residues 90 to 97 are extracellular; sequence DGSTGPTR. The helical transmembrane segment at 98-118 threads the bilayer; the sequence is FFLFGILFSICFSCLLAHAVS. Over 119–129 the chain is Cytoplasmic; it reads LTKLVRGRKPL. A helical membrane pass occupies residues 130–150; that stretch reads SLLVILGLAVGFSLVQDVIAI. The Extracellular portion of the chain corresponds to 151–176; sequence EYIVLTMNRTNVNVFSELSAPRRNED. Asparagine 158 is a glycosylation site (N-linked (GlcNAc...) asparagine). The helical transmembrane segment at 177 to 197 threads the bilayer; the sequence is FVLLLTYVLFLMALTFLMSSF. Residues 198 to 212 lie on the Cytoplasmic side of the membrane; the sequence is TFCGSFTGWKRHGAH. The chain crosses the membrane as a helical span at residues 213–233; it reads IYLTMLLSIAIWVAWITLLML. The Extracellular segment spans residues 234–247; that stretch reads PDFDRRWDDTILSS. Residues 248 to 268 form a helical membrane-spanning segment; the sequence is ALAANGWVFLLAYVSPEFWLL. Residues 269–357 are Cytoplasmic-facing; it reads TKQRNPMDYP…KDYEVKKEGS (89 aa). At serine 301 the chain carries Phosphoserine. A phosphotyrosine mark is found at tyrosine 317 and tyrosine 320. Phosphoserine is present on serine 345. 2 positions are modified to phosphotyrosine: tyrosine 347 and tyrosine 350.

This sequence belongs to the G-protein coupled receptor 3 family. In terms of assembly, interacts (via its transmembrane domain) with EGFR. Post-translationally, phosphorylated in two conserved double-tyrosine motifs, Tyr-317/Tyr-320 and Tyr-347/Tyr-350, by EGFR; leading to inactivation of the tumor suppressive function of GPRC5A in lung cancer cells. Tyr-317 and Tyr-320 are the preferred residues responsible for EGFR-mediated GPRC5A phosphorylation. Expressed at high level in fetal and adult lung tissues but repressed in most human lung cancers. Constitutively expressed in fetal kidney and adult placenta, kidney, prostate, testis, ovary, small intestine, colon, stomach, and spinal cord at low to moderate levels. Not detectable in fetal heart, brain, and liver and adult heart, brain, liver, skeletal muscle, pancreas, spleen, thymus, and peripheral leukocytes. According to PubMed:10783259, expressed at low but detectable level in pancreas and heart.

It localises to the cell membrane. The protein localises to the cytoplasmic vesicle membrane. Orphan receptor. Could be involved in modulating differentiation and maintaining homeostasis of epithelial cells. This retinoic acid-inducible GPCR provide evidence for a possible interaction between retinoid and G-protein signaling pathways. Functions as a negative modulator of EGFR signaling. May act as a lung tumor suppressor. This Homo sapiens (Human) protein is Retinoic acid-induced protein 3 (GPRC5A).